Consider the following 211-residue polypeptide: Thiamine-phosphate synthase (211 aa).

Residues 39-43 and asparagine 71 each bind 4-amino-2-methyl-5-(diphosphooxymethyl)pyrimidine; that span reads QLREK. 2 residues coordinate Mg(2+): aspartate 72 and aspartate 91. Serine 110 contributes to the 4-amino-2-methyl-5-(diphosphooxymethyl)pyrimidine binding site. 136 to 138 contacts 2-[(2R,5Z)-2-carboxy-4-methylthiazol-5(2H)-ylidene]ethyl phosphate; sequence TAT. Lysine 139 serves as a coordination point for 4-amino-2-methyl-5-(diphosphooxymethyl)pyrimidine. 2-[(2R,5Z)-2-carboxy-4-methylthiazol-5(2H)-ylidene]ethyl phosphate contacts are provided by residues alanine 167 and 187 to 188; that span reads VS.

This sequence belongs to the thiamine-phosphate synthase family. Mg(2+) is required as a cofactor.

The enzyme catalyses 2-[(2R,5Z)-2-carboxy-4-methylthiazol-5(2H)-ylidene]ethyl phosphate + 4-amino-2-methyl-5-(diphosphooxymethyl)pyrimidine + 2 H(+) = thiamine phosphate + CO2 + diphosphate. It carries out the reaction 2-(2-carboxy-4-methylthiazol-5-yl)ethyl phosphate + 4-amino-2-methyl-5-(diphosphooxymethyl)pyrimidine + 2 H(+) = thiamine phosphate + CO2 + diphosphate. The catalysed reaction is 4-methyl-5-(2-phosphooxyethyl)-thiazole + 4-amino-2-methyl-5-(diphosphooxymethyl)pyrimidine + H(+) = thiamine phosphate + diphosphate. It functions in the pathway cofactor biosynthesis; thiamine diphosphate biosynthesis; thiamine phosphate from 4-amino-2-methyl-5-diphosphomethylpyrimidine and 4-methyl-5-(2-phosphoethyl)-thiazole: step 1/1. In terms of biological role, condenses 4-methyl-5-(beta-hydroxyethyl)thiazole monophosphate (THZ-P) and 2-methyl-4-amino-5-hydroxymethyl pyrimidine pyrophosphate (HMP-PP) to form thiamine monophosphate (TMP). In Solidesulfovibrio magneticus (strain ATCC 700980 / DSM 13731 / RS-1) (Desulfovibrio magneticus), this protein is Thiamine-phosphate synthase.